The sequence spans 530 residues: Nectin-2 (530 aa).

Positions 1–31 are cleaved as a signal peptide; the sequence is MARAAVLPPSRLSPTLPLLPLLLLLLQETGA. Positions 32–147 constitute an Ig-like V-type domain; sequence QDVRVRVLPE…NGTRRGVTWL (116 aa). Topologically, residues 32–351 are extracellular; it reads QDVRVRVLPE…STAGAGATGG (320 aa). Cys-54 and Cys-131 are joined by a disulfide. Asn-128 and Asn-138 each carry an N-linked (GlcNAc...) asparagine glycan. 2 consecutive Ig-like C2-type domains span residues 153–247 and 252–337; these read PENH…VTLS and PEVS…VILV. 2 disulfide bridges follow: Cys-174-Cys-229 and Cys-274-Cys-320. Asn-315 carries N-linked (GlcNAc...) asparagine glycosylation. The chain crosses the membrane as a helical span at residues 352-372; the sequence is IIGGIIAAIIATAVAGTGILI. Residues 373–530 are Cytoplasmic-facing; sequence CRQQRKEQRL…DFFVSRAMYV (158 aa). Residues 382 to 407 are disordered; it reads LQAADEEEELEGPPSYKPPTPKAKLE. Thr-401 carries the phosphothreonine modification. Ser-424 is subject to Phosphoserine.

The protein belongs to the nectin family. Can form trans-heterodimers with NECTIN3. Interacts with CD226 or with PVRIG; these interactions are competitive and have a differential functional outcome on T-cell activation, either positive or negative, respectively. Binds with low affinity to TIGIT. In terms of tissue distribution, brain, spinal cord, spleen, kidney, heart and liver.

It is found in the cell membrane. Modulator of T-cell signaling. Can be either a costimulator of T-cell function, or a coinhibitor, depending on the receptor it binds to. Upon binding to CD226, stimulates T-cell proliferation and cytokine production, including that of IL2, IL5, IL10, IL13, and IFNG. Upon interaction with PVRIG, inhibits T-cell proliferation. These interactions are competitive. Probable cell adhesion protein. In Mus musculus (Mouse), this protein is Nectin-2.